A 480-amino-acid polypeptide reads, in one-letter code: Membrane-bound lytic murein transglycosylase F (480 aa).

Positions 1-15 are cleaved as a signal peptide; the sequence is MNRILLTLLTLTLLA. A non-LT domain region spans residues 16–259; that stretch reads GCQRVAVEET…HLDEKYFAHV (244 aa). The interval 260–480 is LT domain; the sequence is KRFDYVDTRA…EKAITGAQPE (221 aa). Glutamate 304 is a catalytic residue.

This sequence in the N-terminal section; belongs to the bacterial solute-binding protein 3 family. It in the C-terminal section; belongs to the transglycosylase Slt family.

It is found in the cell outer membrane. It carries out the reaction Exolytic cleavage of the (1-&gt;4)-beta-glycosidic linkage between N-acetylmuramic acid (MurNAc) and N-acetylglucosamine (GlcNAc) residues in peptidoglycan, from either the reducing or the non-reducing ends of the peptidoglycan chains, with concomitant formation of a 1,6-anhydrobond in the MurNAc residue.. Murein-degrading enzyme that degrades murein glycan strands and insoluble, high-molecular weight murein sacculi, with the concomitant formation of a 1,6-anhydromuramoyl product. Lytic transglycosylases (LTs) play an integral role in the metabolism of the peptidoglycan (PG) sacculus. Their lytic action creates space within the PG sacculus to allow for its expansion as well as for the insertion of various structures such as secretion systems and flagella. In Shewanella woodyi (strain ATCC 51908 / MS32), this protein is Membrane-bound lytic murein transglycosylase F.